Consider the following 733-residue polypeptide: ATP-dependent RNA helicase DBP7 (733 aa).

Disordered stretches follow at residues 1–92 and 119–139; these read MDED…SKMI and SSQL…SNAP. The segment covering 17-30 has biased composition (polar residues); that stretch reads SVSSGSNKRTTSKV. The span at 52–80 shows a compositional bias: basic and acidic residues; sequence QKKDRSATGKDDGKKHENDESNDSKKRPT. Positions 144–173 match the Q motif motif; it reads STFEGLGINERLSKHLTETLRFKNPTKVQK. The Helicase ATP-binding domain maps to 177–372; the sequence is PTMLSTERDL…SIILNNPEMI (196 aa). ATP is bound at residue 190 to 197; it reads AQTGSGKT. The DEAD box signature appears at 304–307; sequence DEGD. The Helicase C-terminal domain occupies 406 to 596; the sequence is TLSAILKKIS…NYENYLKDGF (191 aa). The segment at 687 to 714 is disordered; that stretch reads KKLGKSVESNSGIQGASKKTKKEDPRKK.

Belongs to the DEAD box helicase family. DDX31/DBP7 subfamily.

It is found in the nucleus. It localises to the nucleolus. It catalyses the reaction ATP + H2O = ADP + phosphate + H(+). Functionally, ATP-binding RNA helicase involved in the biogenesis of 60S ribosomal subunits and is required for the normal formation of 25S and 5.8S rRNAs. The sequence is that of ATP-dependent RNA helicase DBP7 (DPB7) from Scheffersomyces stipitis (strain ATCC 58785 / CBS 6054 / NBRC 10063 / NRRL Y-11545) (Yeast).